A 470-amino-acid polypeptide reads, in one-letter code: MEFSSHHIRLLQQLDEQRQKDLFCDCHIIVEGQMFKAHRNVLFASSGYFKMLLSQSCRDMGEPITATFDVFSADTFTAILDFVYSGKLPLSGQNVIEVMSAASYLQMTDVIGVCKMFIKSSLDINEKDRDGFFSLSDKDAGSNGSGLYAAGWRTESSPTHTHDTAEHGSFIAGYNYPPPITSRLQRPFSKHPRKPELVRKHRRRLLPEPLTPAPLSHIPLGDLVGGSAECMLHDEETVESVSQEEERTQTQESIISIKDEDEDAASHSWPESPQQESLDQGPALHITKAEELYKAMPTMLGGVSGWGEDELSSGRFKCPFCTHTVKRKADLKRHLRCHTGERPYPCEACGKRFTRLEHLRNHFQTIHEAGKLICRRCKLPVTKVTGRVIQDGTRRYRLCHACLAEAGLDNVNFDYGEDQPLVLPPENEREHCWNFKEEGRKENGSERAESDLAIQEVVDSEDDELKEKQD.

One can recognise a BTB domain in the interval 24-92 (CDCHIIVEGQ…VYSGKLPLSG (69 aa)). Residues 260 to 280 (EDEDAASHSWPESPQQESLDQ) are disordered. The segment covering 269–278 (WPESPQQESL) has biased composition (polar residues). 2 consecutive C2H2-type zinc fingers follow at residues 316–338 (FKCP…LRCH) and 344–367 (YPCE…QTIH). Residues 439–450 (GRKENGSERAES) are compositionally biased toward basic and acidic residues. The interval 439 to 470 (GRKENGSERAESDLAIQEVVDSEDDELKEKQD) is disordered.

The protein localises to the nucleus. In terms of biological role, may be involved in transcriptional regulation. The protein is Zinc finger and BTB domain-containing protein 8A.1-A (zbtb8a.1-a) of Xenopus laevis (African clawed frog).